The sequence spans 557 residues: Urocanate hydratase (557 aa).

NAD(+) contacts are provided by residues 52 to 53, Gln-130, 176 to 178, Glu-196, 242 to 243, 263 to 267, 273 to 274, and Tyr-322; these read GG, GMG, NA, QTSAH, and YL. Residue Cys-410 is part of the active site. Gly-492 contacts NAD(+).

Belongs to the urocanase family. The cofactor is NAD(+).

It localises to the cytoplasm. It catalyses the reaction 4-imidazolone-5-propanoate = trans-urocanate + H2O. It participates in amino-acid degradation; L-histidine degradation into L-glutamate; N-formimidoyl-L-glutamate from L-histidine: step 2/3. Catalyzes the conversion of urocanate to 4-imidazolone-5-propionate. The chain is Urocanate hydratase from Rhizobium meliloti (strain 1021) (Ensifer meliloti).